The primary structure comprises 216 residues: Uracil phosphoribosyltransferase (216 aa).

Residues Arg85, Arg110, and 135 to 143 (DPMVATGYS) contribute to the 5-phospho-alpha-D-ribose 1-diphosphate site. Uracil is bound by residues Ile200 and 205–207 (GDA). Asp206 is a binding site for 5-phospho-alpha-D-ribose 1-diphosphate.

This sequence belongs to the UPRTase family. Requires Mg(2+) as cofactor.

The catalysed reaction is UMP + diphosphate = 5-phospho-alpha-D-ribose 1-diphosphate + uracil. It participates in pyrimidine metabolism; UMP biosynthesis via salvage pathway; UMP from uracil: step 1/1. Its activity is regulated as follows. Allosterically activated by GTP. Catalyzes the conversion of uracil and 5-phospho-alpha-D-ribose 1-diphosphate (PRPP) to UMP and diphosphate. The chain is Uracil phosphoribosyltransferase from Burkholderia lata (strain ATCC 17760 / DSM 23089 / LMG 22485 / NCIMB 9086 / R18194 / 383).